We begin with the raw amino-acid sequence, 334 residues long: MIRMTLDEVRELAVRILRRHAFSEAHVQAVADTLVAGERDECASHGIWRLLGCIATLKAGKVSADAEPELHDIAPGLLRVDAHGGFSQCAFRLGLPHLLEKARSQGIAAMAVNRCVHFSALWVEVEALTEAGLVALATTPSHAWVAPAGGRKPIFGTNPIAFGWPRPDGPPFVFDFATSAVARGEIQLHERAGKPIPLGWGVDEQGEPTTDASAALRGAMLTFGGHKGSALAAMVELLAGPLIGDLTSAESLAYDEGSRSSPYGGELLIAIDPRRMLGASAEEHLARAETLFEGIVEQGARLPSQRRFEARERSARDGVTIPEALHRELLALLE.

Ser44 acts as the Charge relay system in catalysis. The active-site Proton donor is the His45. Residue Arg49 participates in substrate binding. Residue 117 to 121 (HFSAL) coordinates NADP(+). Thr157 provides a ligand contact to substrate. An NADP(+)-binding site is contributed by 175-177 (DFA). 183–184 (RG) is a substrate binding site. The active-site Charge relay system is the Glu185. NADP(+) contacts are provided by residues 226-227 (HK) and 301-307 (RLPSQRR).

Belongs to the LDH2/MDH2 oxidoreductase family. Homodimer.

It catalyses the reaction L-pipecolate + NADP(+) = Delta(1)-piperideine-2-carboxylate + NADPH + H(+). The enzyme catalyses L-proline + NADP(+) = 1-pyrroline-2-carboxylate + NADPH + H(+). It carries out the reaction cis-4-hydroxy-L-proline + NADP(+) = Delta(1)-pyrroline-(4S)-hydroxy-2-carboxylate + NADPH + 2 H(+). Catalyzes the reduction of both Delta(1)-pyrroline-2-carboxylate (Pyr2C) and Delta(1)-piperideine-2-carboxylate (Pip2C) to L-proline and L-pipecolate, respectively, using NADPH as the electron donor. Cannot use NADH instead of NADPH. Is likely involved in a degradation pathway that converts trans-3-hydroxy-L-proline (t3LHyp) to L-proline, which would allow P.aeruginosa to grow on t3LHyp as a sole carbon source. Can also catalyze the reverse oxidation reactions, albeit at a much lower rate. Is also able to use Delta(1)-pyrroline-(4S)-hydroxy-2-carboxylate (Pyr4SH2C) and cis-4-hydroxy-L-proline (c4LHyp) as substrates, and might be involved in the metabolism of c4LHyp, a compound which is generated by the hydroxylation of free L-proline in bacteria. This chain is Delta(1)-pyrroline-2-carboxylate/Delta(1)-piperideine-2-carboxylate reductase, found in Pseudomonas aeruginosa (strain ATCC 15692 / DSM 22644 / CIP 104116 / JCM 14847 / LMG 12228 / 1C / PRS 101 / PAO1).